A 639-amino-acid polypeptide reads, in one-letter code: Extracellular metalloproteinase 9 (639 aa).

The signal sequence occupies residues 1 to 19 (MHGLLLAAGLLSLPLRALG). The propeptide occupies 20–250 (HPNPNPQMHT…IHGVVDYVAD (231 aa)). The N-linked (GlcNAc...) asparagine glycan is linked to asparagine 278. Residues 293–312 (PTTRGNNGIAQDNPSGGNQY) form a disordered region. Zn(2+) is bound at residue histidine 434. Glutamate 435 is a catalytic residue. Histidine 438 is a binding site for Zn(2+).

This sequence belongs to the peptidase M36 family. Zn(2+) is required as a cofactor.

Its subcellular location is the secreted. Its function is as follows. Secreted metalloproteinase that allows assimilation of proteinaceous substrates and probably acts as a virulence factor. This is Extracellular metalloproteinase 9 (MEP9) from Coccidioides posadasii (strain C735) (Valley fever fungus).